The following is a 170-amino-acid chain: Crossover junction endodeoxyribonuclease RuvC (170 aa).

Catalysis depends on residues aspartate 9, glutamate 70, and aspartate 145. Mg(2+)-binding residues include aspartate 9, glutamate 70, and aspartate 145.

The protein belongs to the RuvC family. Homodimer which binds Holliday junction (HJ) DNA. The HJ becomes 2-fold symmetrical on binding to RuvC with unstacked arms; it has a different conformation from HJ DNA in complex with RuvA. In the full resolvosome a probable DNA-RuvA(4)-RuvB(12)-RuvC(2) complex forms which resolves the HJ. Mg(2+) serves as cofactor.

The protein localises to the cytoplasm. The enzyme catalyses Endonucleolytic cleavage at a junction such as a reciprocal single-stranded crossover between two homologous DNA duplexes (Holliday junction).. Functionally, the RuvA-RuvB-RuvC complex processes Holliday junction (HJ) DNA during genetic recombination and DNA repair. Endonuclease that resolves HJ intermediates. Cleaves cruciform DNA by making single-stranded nicks across the HJ at symmetrical positions within the homologous arms, yielding a 5'-phosphate and a 3'-hydroxyl group; requires a central core of homology in the junction. The consensus cleavage sequence is 5'-(A/T)TT(C/G)-3'. Cleavage occurs on the 3'-side of the TT dinucleotide at the point of strand exchange. HJ branch migration catalyzed by RuvA-RuvB allows RuvC to scan DNA until it finds its consensus sequence, where it cleaves and resolves the cruciform DNA. The chain is Crossover junction endodeoxyribonuclease RuvC from Chlamydia trachomatis serovar L2 (strain ATCC VR-902B / DSM 19102 / 434/Bu).